The sequence spans 170 residues: NADH-quinone oxidoreductase subunit B (170 aa).

[4Fe-4S] cluster is bound by residues C46, C47, C111, and C141.

This sequence belongs to the complex I 20 kDa subunit family. NDH-1 is composed of 14 different subunits. Subunits NuoB, C, D, E, F, and G constitute the peripheral sector of the complex. [4Fe-4S] cluster is required as a cofactor.

Its subcellular location is the cell membrane. It carries out the reaction a quinone + NADH + 5 H(+)(in) = a quinol + NAD(+) + 4 H(+)(out). NDH-1 shuttles electrons from NADH, via FMN and iron-sulfur (Fe-S) centers, to quinones in the respiratory chain. The immediate electron acceptor for the enzyme in this species is believed to be a menaquinone. Couples the redox reaction to proton translocation (for every two electrons transferred, four hydrogen ions are translocated across the cytoplasmic membrane), and thus conserves the redox energy in a proton gradient. The sequence is that of NADH-quinone oxidoreductase subunit B from Geobacillus thermodenitrificans (strain NG80-2).